The following is a 196-amino-acid chain: Transmembrane protein 126A (196 aa).

Topologically, residues Met1–Glu34 are mitochondrial matrix. A helical membrane pass occupies residues Tyr35 to Phe55. Over Arg56–Arg57 the chain is Mitochondrial intermembrane. The chain crosses the membrane as a helical span at residues Ile58–Leu78. At Thr79 to Arg106 the chain is on the mitochondrial matrix side. The helical transmembrane segment at Gly107 to Asn127 threads the bilayer. Topologically, residues Gly128–Lys159 are mitochondrial intermembrane. The helical transmembrane segment at Met160–Ser176 threads the bilayer. Residues Arg177 to His196 lie on the Mitochondrial matrix side of the membrane.

It belongs to the TMEM126 family. In terms of assembly, interacts with OXA1L; promoting cotranslational quality control in mitochondria. In the retina, significant levels of expression are detected in the ganglion cell layer, the optic nerve head, the outer plexiform layer, and in the outer ellipsoide length of photoreceptor inner segments.

It localises to the mitochondrion inner membrane. In terms of biological role, protein required for the cotranslational protein quality control in the inner membrane of the mitochondria. Associates with newly synthesized polypeptides and may act as a chaperone that cooperates with OXA1L for the insertion of newly synthesized mitochondrial proteins into the inner membrane. Required for the assembly of the ND4 module of mitochondrial complex I. This chain is Transmembrane protein 126A, found in Mus musculus (Mouse).